Reading from the N-terminus, the 298-residue chain is MNKDNVKLAIAPIGWTNDDMPDLGKENTFQQCVSEMALAGFTGSEVGSKYPRDPAVLKPMLDIRGIQICNAWFSTFFADGLKEKTIDEFINHMNFLHAMGAKVIGCSEQSKSIQGTTKGVFEEKPYFSDEEWQRVADGYNELADIAKGKGMQVCLHHHMGTGIQTTAEIDRYMSMVNDDVYLLFDTGHAYYSEGSQQAMMAILEKYLPRINHVHLKDVRDEVVAEVKANKLSFLDGVKKGTFTVPGDGVIDFRPVFKLLDERGYKGWMVVEAEQDPALANPFEYAVKARRYIKETAGI.

This sequence belongs to the IolE/MocC family. Glutathione serves as cofactor. Co(2+) is required as a cofactor. Requires Mn(2+) as cofactor.

It carries out the reaction scyllo-inosose = 3D-3,5/4-trihydroxycyclohexane-1,2-dione + H2O. Functionally, catalyzes the dehydration of inosose (2-keto-myo-inositol, 2KMI or 2,4,6/3,5-pentahydroxycyclohexanone) to 3D-(3,5/4)-trihydroxycyclohexane-1,2-dione (D-2,3-diketo-4-deoxy-epi-inositol). The polypeptide is Inosose dehydratase (Serratia proteamaculans (strain 568)).